We begin with the raw amino-acid sequence, 664 residues long: Putative membrane protein Bcell_0381 (664 aa).

A compositionally biased stretch (acidic residues) spans 588–616 (DVTQDENGEEKSEEDNKEEIVEENTEEDN). The interval 588–622 (DVTQDENGEEKSEEDNKEEIVEENTEEDNKEEKTI) is disordered. Residues 636–656 (YQFLLAGIIMLVGGSCIYVFY) form a helical membrane-spanning segment.

It is found in the cell membrane. In Evansella cellulosilytica (strain ATCC 21833 / DSM 2522 / FERM P-1141 / JCM 9156 / N-4) (Bacillus cellulosilyticus), this protein is Putative membrane protein Bcell_0381.